The primary structure comprises 324 residues: MDLKHSRSVKLNDGNLMPVLGFGTFASKEIPKSKAAEATKVAIDVGFRHIDAAYFYQNEEEVGQALRDKMADGTVKREDLFYTTKIWITFLRPELVRQCLERSLKKLGLDYVDLCIIHIPIAMKPGEELLPKDANGKFIFDTVDIRDTWEALEKCKDAGLSKSIGVSNFNHKQLELILNKPRLKYKPTCNQVECHPYLNQSKLLEFCKSKDIVLVAYSALGSHRDSSWVSSDSPYLLEDPVLMTIAKKHNQTPGQVALRYQLQRGVVVLAKSFNEKRIKENFQVFDFELTPEDMKTIDSLNRNFRYSQMAFALDHPDYPFLEEY.

NADP(+)-binding positions include 24 to 26 (TFA) and Asp51. The active-site Proton donor is the Tyr56. Substrate is bound at residue His118. Residues 167 to 168 (SN), Gln191, 217 to 225 (YSALGSHRD), and 269 to 281 (LAKS…IKEN) contribute to the NADP(+) site.

This sequence belongs to the aldo/keto reductase family. Monomer. In terms of tissue distribution, expressed in lung, specifically in bronchiolar club cells, type II alveolar cells and epithelial cells of the duct of the bronchial gland (at protein level). Expressed in gastric parietal cells and in epithelial cells of the large intestine and colon (at protein level). Expressed in brown adipocytes (at protein level). Expressed in vascular endothelial cells (at protein level).

It localises to the cytoplasm. It catalyses the reaction (2E,6E)-farnesol + NADP(+) = (2E,6E)-farnesal + NADPH + H(+). With respect to regulation, the dehydrogenase activity is inhibited by 3',3'',5',5''-tetraiodophenolphthalein, phenolphthalein, genistein, quercetin, zearalenone and diethylstilbestrol. Functionally, catalyzes the NADPH-dependent reduction of a variety of substrates including aromatic and aliphatic aldehydes, quinones, ketones, dicarbonyl compounds and 17-ketosteroids. Catalyzes the NADP(+)-dependent oxidation of aromatic, alicyclic and aliphatic alcohols, and 17beta-hydroxysteroids. To a lesser extent, can also catalyze the reduction of some aldoses and ketoses and the oxidation of some sugar alcohols. In the stomach, lung and colon tissues, mediates the reduction of farnesal and geranylgeranial into farnesol and geranylgeraniol respectively. By reducing 4-hydroxy-2-nonenal (HNE), produced during lipid peroxidation, into 1,4-dihydro-2-nonene (DHN), protects vascular endothelial cells from damage elicited by oxidized lipoproteins. This is Aldo-keto reductase family 1 member C15 from Rattus norvegicus (Rat).